The sequence spans 64 residues: uncharacterized protein (64 aa).

This is an uncharacterized protein from Bacillus subtilis (strain 168).